A 1110-amino-acid polypeptide reads, in one-letter code: Brother of CDO (1110 aa).

The first 25 residues, 1–25 (MTTCRRERPILTLLWILMATAGCLA), serve as a signal peptide directing secretion. Residues 26–850 (DLNEVPQVTV…MVARASDLPY (825 aa)) lie on the Extracellular side of the membrane. Ig-like C2-type domains lie at 31 to 118 (PQVT…ATVT), 124 to 208 (DFKL…VKTS), 229 to 310 (PLEA…VILY), and 318 to 402 (PEVT…VQLR). Cystine bridges form between Cys52–Cys101, Cys145–Cys195, Cys247–Cys294, and Cys339–Cys386. 5 N-linked (GlcNAc...) asparagine glycosylation sites follow: Asn60, Asn71, Asn93, Asn184, and Asn270. Residues 407-458 (DTTLRPGRDTKPIAATPPMPPSRPSRPDQMLREQPGLVKPPTSSVQPTSLKC) are disordered. A compositionally biased stretch (pro residues) spans 421–430 (ATPPMPPSRP). 3 Fibronectin type-III domains span residues 469-566 (APII…GRRP), 603-698 (APDR…VVSG), and 707-807 (PVAG…TKAR). Asn512 is a glycosylation site (N-linked (GlcNAc...) asparagine). Residues 561–610 (RTGRRPKPEIVASKEQQIQRDDPGASLQSSSQPDHGRLSPPEAPDRPTIS) are disordered. Residues Asn720 and Asn754 are each glycosylated (N-linked (GlcNAc...) asparagine). Residues 809–828 (FSGQPGRPPPLTLAPPQPPP) form a disordered region. Residues 814-828 (GRPPPLTLAPPQPPP) are compositionally biased toward pro residues. Residues 851-871 (LIVGVVLGSIVLIIVTFIPFC) form a helical membrane-spanning segment. The Cytoplasmic portion of the chain corresponds to 872–1110 (LWRAWSKQKH…VSFETPPPTI (239 aa)). The disordered stretch occupies residues 1065 to 1110 (SDSCQVGGGDWSSQHPSGTYTGQERGMRFSPSPSVHVSFETPPPTI). Polar residues predominate over residues 1075-1086 (WSSQHPSGTYTG).

In terms of assembly, part of a complex that contains BOC, CDON, NEO1, cadherins and CTNNB1. Interacts with SHH, DHH and IHH. Interacts with NTN3. Interacts with CDH2 and CTNNB1. Interacts with CDH15 only during the early stages of myoblast differentiation. In terms of tissue distribution, highly expressed in embryonic somites, limb buds, dermomyotomes and in the neural tube.

It is found in the membrane. In terms of biological role, component of a cell-surface receptor complex that mediates cell-cell interactions between muscle precursor cells. Promotes differentiation of myogenic cells. This Mus musculus (Mouse) protein is Brother of CDO (Boc).